The sequence spans 252 residues: U2 small nuclear ribonucleoprotein A' (252 aa).

3 LRR repeats span residues 41-62 (PHDA…PLSP), 63-84 (RIRT…LPNA), and 87-108 (NLKN…EVLG). The 39-residue stretch at 121–159 (NPVTKKENYRYWVLWLCPQVRFLDYVKVKDAERQKAKEL) folds into the LRRCT domain.

It belongs to the U2 small nuclear ribonucleoprotein A family. In terms of assembly, associated with the spliceosome.

The protein localises to the nucleus. Involved in pre-mRNA splicing. This Neurospora crassa (strain ATCC 24698 / 74-OR23-1A / CBS 708.71 / DSM 1257 / FGSC 987) protein is U2 small nuclear ribonucleoprotein A' (lea-1).